Consider the following 420-residue polypeptide: Protein phosphatase methylesterase 1 (420 aa).

Low complexity-rich tracts occupy residues 18–28 (PEAPLLSESSS) and 42–51 (SSVSSTGTVI). Residues 18–51 (PEAPLLSESSSMNHPAESSHDEDSSSVSSTGTVI) form a disordered region. Catalysis depends on residues Ser-197, Asp-223, and His-354.

It belongs to the AB hydrolase superfamily.

It catalyses the reaction [phosphatase 2A protein]-C-terminal L-leucine methyl ester + H2O = [phosphatase 2A protein]-C-terminal L-leucine + methanol + H(+). Functionally, demethylates proteins that have been reversibly carboxymethylated. Demethylates the phosphatase PP2A catalytic subunit. This chain is Protein phosphatase methylesterase 1 (ppe1), found in Aspergillus fumigatus (strain ATCC MYA-4609 / CBS 101355 / FGSC A1100 / Af293) (Neosartorya fumigata).